A 275-amino-acid polypeptide reads, in one-letter code: Release factor glutamine methyltransferase (275 aa).

S-adenosyl-L-methionine contacts are provided by residues 117–121 (GTGSG), Asp-140, Trp-168, and Asn-182. Residue 182–185 (NPPY) coordinates substrate.

Belongs to the protein N5-glutamine methyltransferase family. PrmC subfamily.

The catalysed reaction is L-glutaminyl-[peptide chain release factor] + S-adenosyl-L-methionine = N(5)-methyl-L-glutaminyl-[peptide chain release factor] + S-adenosyl-L-homocysteine + H(+). Functionally, methylates the class 1 translation termination release factors RF1/PrfA and RF2/PrfB on the glutamine residue of the universally conserved GGQ motif. This chain is Release factor glutamine methyltransferase, found in Buchnera aphidicola subsp. Schizaphis graminum (strain Sg).